The primary structure comprises 105 residues: Large ribosomal subunit protein uL24 (105 aa).

The protein belongs to the universal ribosomal protein uL24 family. In terms of assembly, part of the 50S ribosomal subunit.

Functionally, one of two assembly initiator proteins, it binds directly to the 5'-end of the 23S rRNA, where it nucleates assembly of the 50S subunit. One of the proteins that surrounds the polypeptide exit tunnel on the outside of the subunit. The protein is Large ribosomal subunit protein uL24 of Mycobacterium leprae (strain Br4923).